The chain runs to 304 residues: N-acetyl-D-glucosamine kinase (304 aa).

Residues 4-11 (GFDMGGTK) and 133-140 (GVGGGLIV) contribute to the ATP site. H157, C177, C179, and C184 together coordinate Zn(2+).

This sequence belongs to the ROK (NagC/XylR) family. NagK subfamily.

It carries out the reaction N-acetyl-D-glucosamine + ATP = N-acetyl-D-glucosamine 6-phosphate + ADP + H(+). It functions in the pathway cell wall biogenesis; peptidoglycan recycling. Functionally, catalyzes the phosphorylation of N-acetyl-D-glucosamine (GlcNAc) derived from cell-wall degradation, yielding GlcNAc-6-P. This is N-acetyl-D-glucosamine kinase from Yersinia pseudotuberculosis serotype IB (strain PB1/+).